Reading from the N-terminus, the 214-residue chain is uncharacterized protein (214 aa).

Residues 2–118 (KIVIADDHHV…ELVKTRQVHG (117 aa)) enclose the Response regulatory domain. Residue D53 is modified to 4-aspartylphosphate. Positions 142 to 207 (EKEKYYQLTR…QAALFAVKYN (66 aa)) constitute an HTH luxR-type domain. A DNA-binding region (H-T-H motif) is located at residues 166 to 185 (NKEIAAALFISEKTVKTHVS).

In terms of processing, phosphorylated by YhcY.

Its subcellular location is the cytoplasm. Its function is as follows. Member of the two-component regulatory system YhcY/YhcZ. This is an uncharacterized protein from Bacillus subtilis (strain 168).